A 796-amino-acid chain; its full sequence is Choline transporter-like 2 (796 aa).

N20 carries N-linked (GlcNAc...) asparagine glycosylation. A helical transmembrane segment spans residues 35 to 55 (PCLLLFVLFLGGWAFIAQYAI). N209 and N284 each carry an N-linked (GlcNAc...) asparagine glycan. The next 4 helical transmembrane spans lie at 304–324 (WSIV…YIAL), 332–352 (ILWF…YFSV), 386–406 (LYLS…VIVL), and 431–451 (VFFP…AIGV). Residues N488 and N520 are each glycosylated (N-linked (GlcNAc...) asparagine). Helical transmembrane passes span 542-562 (VFGF…VLAS), 585-605 (FFQT…ILAI), 626-648 (AVTR…FLKF), 691-711 (FLFF…TYYF), and 724-744 (IAVP…VFFG).

It belongs to the CTL (choline transporter-like) family.

It localises to the membrane. The polypeptide is Choline transporter-like 2 (Drosophila melanogaster (Fruit fly)).